A 124-amino-acid polypeptide reads, in one-letter code: Urocortin (124 aa).

An N-terminal signal peptide occupies residues 1 to 25; it reads MRQAGRAALLAALLLLVQLCPGSSQ. Positions 23 to 46 are disordered; that stretch reads SSQRSPEAAGVQDPSLRWSPGARN. The propeptide occupies 26–82; the sequence is RSPEAAGVQDPSLRWSPGARNQGGGARALLLLLAERFPRRAGPGRLGLGTAGERPRR. Val-122 bears the Valine amide mark.

It belongs to the sauvagine/corticotropin-releasing factor/urotensin I family. As to quaternary structure, interacts with CRHR1 and CRHR2 (via their N-terminal extracellular domain). In terms of tissue distribution, keratinocytes in epidermis and the outer and inner root sheaths of hair follicles, epithelium of sebaceous and sweat glands, erector pili muscle, cutaneous blood vessel walls, cutaneous nerves and dermal mononuclear cells. Detected in plasma cells in the lamia propria in colon mucosa (at protein level). Expressed in pituitary and adrenal glands. Detected in plasma cells in the lamia propria in colon mucosa.

It is found in the secreted. Its function is as follows. Acts in vitro to stimulate the secretion of adrenocorticotropic hormone (ACTH). Binds with high affinity to CRF receptor types 1, 2-alpha, and 2-beta. Plays a role in the establishment of normal hearing thresholds. Reduces food intake and regulates ghrelin levels in gastric body and plasma. This Homo sapiens (Human) protein is Urocortin (UCN).